A 201-amino-acid polypeptide reads, in one-letter code: ATP-dependent Clp protease proteolytic subunit (201 aa).

The active-site Nucleophile is S98. Residue H123 is part of the active site.

It belongs to the peptidase S14 family. As to quaternary structure, fourteen ClpP subunits assemble into 2 heptameric rings which stack back to back to give a disk-like structure with a central cavity, resembling the structure of eukaryotic proteasomes.

It is found in the cytoplasm. The enzyme catalyses Hydrolysis of proteins to small peptides in the presence of ATP and magnesium. alpha-casein is the usual test substrate. In the absence of ATP, only oligopeptides shorter than five residues are hydrolyzed (such as succinyl-Leu-Tyr-|-NHMec, and Leu-Tyr-Leu-|-Tyr-Trp, in which cleavage of the -Tyr-|-Leu- and -Tyr-|-Trp bonds also occurs).. Its function is as follows. Cleaves peptides in various proteins in a process that requires ATP hydrolysis. Has a chymotrypsin-like activity. Plays a major role in the degradation of misfolded proteins. This chain is ATP-dependent Clp protease proteolytic subunit, found in Rickettsia peacockii (strain Rustic).